A 135-amino-acid chain; its full sequence is UPF0102 protein RPC_0320 (135 aa).

The protein belongs to the UPF0102 family.

This is UPF0102 protein RPC_0320 from Rhodopseudomonas palustris (strain BisB18).